The following is a 318-amino-acid chain: Ethyl acetate hydrolase (318 aa).

Active-site residues include Ser-165, Asp-261, and His-291.

The protein belongs to the 'GDXG' lipolytic enzyme family. Monomer.

The protein localises to the cytoplasm. The catalysed reaction is ethyl acetate + H2O = ethanol + acetate + H(+). Inhibited by the serine protease inhibitor phenylmethylsulfonyl fluoride, the histidine reagent diethylpyrocarbonate and two sulfhydryl reagents, mercuric chloride and naphthol AS-D chloroacetate. Not inhibited by EDTA. Its function is as follows. Esterase that catalyzes the hydrolysis of ethyl acetate. Can also use propyl acetate and the chromogenic substrates alpha-naphthyl acetate, alpha-naphthyl propionate, alpha-naphthyl caproate and 4-nitrophenyl acetate, with a preference for short-chain aliphatic esters. Highest activity is obtained in vitro with propyl acetate, followed by ethyl acetate. In vivo, could be involved in pyoverdine biosynthesis, but its specific role and its in vivo substrate have not been identified. This is Ethyl acetate hydrolase from Pseudomonas putida (Arthrobacter siderocapsulatus).